Here is a 710-residue protein sequence, read N- to C-terminus: Probable thimet oligopeptidase (710 aa).

Zn(2+) is bound at residue H502. E503 is a catalytic residue. Zn(2+) is bound at residue H506.

Belongs to the peptidase M3 family. The cofactor is Zn(2+).

It is found in the cytoplasm. It catalyses the reaction Preferential cleavage of bonds with hydrophobic residues at P1, P2 and P3' and a small residue at P1' in substrates of 5 to 15 residues.. Its function is as follows. Involved in cytoplasmic peptide degradation. The polypeptide is Probable thimet oligopeptidase (Arabidopsis thaliana (Mouse-ear cress)).